The primary structure comprises 375 residues: Proclotting enzyme (375 aa).

Residues Met1 to Cys21 form the signal peptide. Positions Ser22–Gln27 are excised as a propeptide. Pyrrolidone carboxylic acid is present on Gln30. The region spanning Leu39–Cys84 is the Clip domain. Cystine bridges form between Cys40–Cys83, Cys50–Cys73, and Cys56–Cys84. The disordered stretch occupies residues Val90 to Asn113. 4 disulfides stabilise this stretch: Cys118-Cys248, Cys157-Cys173, Cys295-Cys311, and Cys322-Cys351. Asn122 carries an N-linked (GlcNAc...) asparagine glycan. Positions Ile128–Val375 constitute a Peptidase S1 domain. The active-site Charge relay system is the His172. The Ca(2+) site is built by Glu194, Asn196, Ser199, and Asp202. Asp228 serves as the catalytic Charge relay system. N-linked (GlcNAc...) asparagine glycans are attached at residues Asn235 and Asn304. The Charge relay system role is filled by Ser326.

The protein belongs to the peptidase S1 family. CLIP subfamily. In terms of assembly, in the active form, heterodimer of a light chain and a heavy chain; disulfide-linked. Forms a covalent heterodimer with intracellular coagulation inhibitor 2/LICI-2. Proteolytically cleaved into its mature active form by serine protease factor B. Cleavage produces a 25 kDa light chain containing the CLIP domain and a catalytic 31 kDa heavy chain which remain covalently associated through an interchain disulfide bond. Proteolytically cleaved by clotting factor G subunit beta. Post-translationally, contains six O-linked carbohydrate chains in the N-terminal light chain. In terms of tissue distribution, expressed in hemocytes (at protein level).

It localises to the cytoplasmic vesicle. It is found in the secretory vesicle. The protein resides in the secreted. The enzyme catalyses Selective cleavage of 18-Arg-|- and 47-Arg-|- bonds in coagulogen to form coagulin and fragments.. Inhibited by intracellular coagulation inhibitor 2/LICI-2 and to a lesser extent by intracellular coagulation inhibitor 3/LICI-3. Functionally, this enzyme is closely associated with an endotoxin-sensitive hemolymph coagulation system in limulus. Its active form catalyzes the conversion of coagulogen to insoluble coagulin gel. The protein is Proclotting enzyme of Tachypleus tridentatus (Japanese horseshoe crab).